Reading from the N-terminus, the 434-residue chain is AT-rich interactive domain-containing protein 5 (434 aa).

Residues 1–120 (MMADTEMQEQ…SSPHVPEESV (120 aa)) form a disordered region. Composition is skewed to basic and acidic residues over residues 25–37 (ELEKDLNSIERPK), 43–54 (DTTHTLDSDVHL), and 78–90 (RNGDVDQSEKKIT). Positions 92 to 102 (DGGQEETTLGE) are enriched in polar residues. One can recognise an ARID domain in the interval 142–233 (PQDQEAFIKE…ALLEYEKHLR (92 aa)). The segment at 237–274 (ELNLPGSASLPSSGIEKEASSHQASGSGRTRRDAAARA) is disordered. The region spanning 336 to 434 (AEVIDVGPPA…RLFVRVPFEQ (99 aa)) is the sHSP domain.

The protein belongs to the small heat shock protein (HSP20) family.

It localises to the nucleus. The protein is AT-rich interactive domain-containing protein 5 (ARID5) of Arabidopsis thaliana (Mouse-ear cress).